The primary structure comprises 491 residues: Probable CtpA-like serine protease (491 aa).

The disordered stretch occupies residues 1 to 22 (MNDHQKNHATSQDDNTKSTPSK). Over residues 8-22 (HATSQDDNTKSTPSK) the composition is skewed to polar residues. A helical transmembrane segment spans residues 31-51 (LWHFILVILGIILLTSIITVV). The PDZ domain maps to 119-201 (TKQFNEGVSG…TYVTLTIKRG (83 aa)). Catalysis depends on charge relay system residues S324, D335, and K349.

Belongs to the peptidase S41A family.

The protein resides in the cell membrane. The polypeptide is Probable CtpA-like serine protease (Staphylococcus epidermidis (strain ATCC 12228 / FDA PCI 1200)).